Reading from the N-terminus, the 240-residue chain is 2,3,4,5-tetrahydropyridine-2,6-dicarboxylate N-acetyltransferase (240 aa).

This sequence belongs to the transferase hexapeptide repeat family. DapH subfamily.

The enzyme catalyses (S)-2,3,4,5-tetrahydrodipicolinate + acetyl-CoA + H2O = L-2-acetamido-6-oxoheptanedioate + CoA. The protein operates within amino-acid biosynthesis; L-lysine biosynthesis via DAP pathway; LL-2,6-diaminopimelate from (S)-tetrahydrodipicolinate (acetylase route): step 1/3. Its function is as follows. Catalyzes the transfer of an acetyl group from acetyl-CoA to tetrahydrodipicolinate. In Bacillus cereus (strain AH187), this protein is 2,3,4,5-tetrahydropyridine-2,6-dicarboxylate N-acetyltransferase.